Consider the following 586-residue polypeptide: NADH-quinone oxidoreductase subunit C/D 2 (586 aa).

Positions 1–173 are NADH dehydrogenase I subunit C; the sequence is MKWVNKGTVE…RTDPPSHDFE (173 aa). Residues 197 to 586 form an NADH dehydrogenase I subunit D region; sequence AELVLNWGPL…LDPVVGETDR (390 aa).

In the N-terminal section; belongs to the complex I 30 kDa subunit family. It in the C-terminal section; belongs to the complex I 49 kDa subunit family. NDH-1 is composed of 13 different subunits. Subunits NuoB, CD, E, F, and G constitute the peripheral sector of the complex.

It is found in the cell inner membrane. It carries out the reaction a quinone + NADH + 5 H(+)(in) = a quinol + NAD(+) + 4 H(+)(out). Functionally, NDH-1 shuttles electrons from NADH, via FMN and iron-sulfur (Fe-S) centers, to quinones in the respiratory chain. The immediate electron acceptor for the enzyme in this species is believed to be ubiquinone. Couples the redox reaction to proton translocation (for every two electrons transferred, four hydrogen ions are translocated across the cytoplasmic membrane), and thus conserves the redox energy in a proton gradient. The chain is NADH-quinone oxidoreductase subunit C/D 2 (nuoC2) from Aquifex aeolicus (strain VF5).